A 408-amino-acid chain; its full sequence is LL-diaminopimelate aminotransferase (408 aa).

Tyr15 and Gly42 together coordinate substrate. Pyridoxal 5'-phosphate-binding positions include Tyr72, 108–109 (SK), Tyr132, Asn187, Tyr218, and 246–248 (SFS). Substrate-binding residues include Lys109, Tyr132, and Asn187. Lys249 carries the N6-(pyridoxal phosphate)lysine modification. Residues Arg257 and Asn292 each contribute to the pyridoxal 5'-phosphate site. Residues Asn292 and Arg388 each coordinate substrate.

It belongs to the class-I pyridoxal-phosphate-dependent aminotransferase family. LL-diaminopimelate aminotransferase subfamily. Homodimer. Requires pyridoxal 5'-phosphate as cofactor.

It catalyses the reaction (2S,6S)-2,6-diaminopimelate + 2-oxoglutarate = (S)-2,3,4,5-tetrahydrodipicolinate + L-glutamate + H2O + H(+). It participates in amino-acid biosynthesis; L-lysine biosynthesis via DAP pathway; LL-2,6-diaminopimelate from (S)-tetrahydrodipicolinate (aminotransferase route): step 1/1. Involved in the synthesis of meso-diaminopimelate (m-DAP or DL-DAP), required for both lysine and peptidoglycan biosynthesis. Catalyzes the direct conversion of tetrahydrodipicolinate to LL-diaminopimelate. The chain is LL-diaminopimelate aminotransferase from Prochlorococcus marinus subsp. pastoris (strain CCMP1986 / NIES-2087 / MED4).